The primary structure comprises 392 residues: DNA-directed RNA polymerase subunit Rpo1C (392 aa).

The protein belongs to the RNA polymerase beta' chain family. Part of the RNA polymerase complex.

It localises to the cytoplasm. It catalyses the reaction RNA(n) + a ribonucleoside 5'-triphosphate = RNA(n+1) + diphosphate. Its function is as follows. DNA-dependent RNA polymerase (RNAP) catalyzes the transcription of DNA into RNA using the four ribonucleoside triphosphates as substrates. Forms part of the jaw domain. This Metallosphaera sedula (strain ATCC 51363 / DSM 5348 / JCM 9185 / NBRC 15509 / TH2) protein is DNA-directed RNA polymerase subunit Rpo1C.